Reading from the N-terminus, the 551-residue chain is Arginine--tRNA ligase (551 aa).

A 'HIGH' region motif is present at residues 123–133 (ANPTGPLTIGR).

It belongs to the class-I aminoacyl-tRNA synthetase family. As to quaternary structure, monomer.

It is found in the cytoplasm. It catalyses the reaction tRNA(Arg) + L-arginine + ATP = L-arginyl-tRNA(Arg) + AMP + diphosphate. The polypeptide is Arginine--tRNA ligase (Prosthecochloris aestuarii (strain DSM 271 / SK 413)).